A 989-amino-acid chain; its full sequence is Mediator of RNA polymerase II transcription subunit 24 (989 aa).

6 short sequence motifs (LXXLL motif) span residues 343-347 (LTPLL), 359-363 (LSLLL), 447-451 (LDLLL), 556-560 (LVALL), 787-791 (LPRLL), and 857-861 (LMRLL).

The protein belongs to the Mediator complex subunit 24 family. In terms of assembly, component of the Mediator complex.

The protein localises to the nucleus. In terms of biological role, component of the Mediator complex, a coactivator involved in the regulated transcription of nearly all RNA polymerase II-dependent genes. Mediator functions as a bridge to convey information from gene-specific regulatory proteins to the basal RNA polymerase II transcription machinery. Mediator is recruited to promoters by direct interactions with regulatory proteins and serves as a scaffold for the assembly of a functional preinitiation complex with RNA polymerase II and the general transcription factors. Required for proliferation of enteric nervous system precursors. Required for the development of dopaminergic amacrine cells and rod photoreceptor cells in the retina. The sequence is that of Mediator of RNA polymerase II transcription subunit 24 (med24) from Danio rerio (Zebrafish).